The following is a 267-amino-acid chain: MRTTSPYSHCSHVEMNAGAFVTMLLVALSVCVAAAVDPDVIQPFPQPKPTTIAQKAAVKYKPLLYTSMVVCVPYAAVDAAGRVTDGLKGRHGNDGCTYARHGSQVYGRVEPYGNLSAIMYAWYFPKRFWLGFPIQRHDWKSVVVWIDNLESKVSAIVAVSMAKSDTKYNTETELDANDFARLQVDNQIVISNTSLRFEFFEFGLRSSYLRLTGYNGQYQNLIMWDQLTDAAREALNDDNNFGSAVVPLSDKQFKAHVKEAYPSKSVR.

The signal sequence occupies residues 1–35; it reads MRTTSPYSHCSHVEMNAGAFVTMLLVALSVCVAAA. Residue N114 is glycosylated (N-linked (GlcNAc...) asparagine). The short motif at 117–127 is the Conserved undecapeptide motif element; that stretch reads AIMYAWYFPKR. The short motif at 134–140 is the Conserved heptapeptide motif element; sequence IQRHDWK. Residue N192 is glycosylated (N-linked (GlcNAc...) asparagine).

The protein belongs to the Necrosis inducing protein (NPP1) family.

It localises to the secreted. Probable secreted effector that may act as a pathogen-associated molecular pattern (PAMP) recognized by the plant immune system. The sequence is that of NLP effector protein 6 from Plasmopara viticola (Downy mildew of grapevine).